The sequence spans 257 residues: 4-hydroxy-tetrahydrodipicolinate reductase (257 aa).

NAD(+)-binding positions include 7 to 12 (GAAGRM), aspartate 32, 91 to 93 (GTT), and 115 to 118 (SPNF). The active-site Proton donor/acceptor is the histidine 147. (S)-2,3,4,5-tetrahydrodipicolinate is bound at residue histidine 148. Catalysis depends on lysine 151, which acts as the Proton donor. Position 157-158 (157-158 (GT)) interacts with (S)-2,3,4,5-tetrahydrodipicolinate.

The protein belongs to the DapB family.

It is found in the cytoplasm. The enzyme catalyses (S)-2,3,4,5-tetrahydrodipicolinate + NAD(+) + H2O = (2S,4S)-4-hydroxy-2,3,4,5-tetrahydrodipicolinate + NADH + H(+). It catalyses the reaction (S)-2,3,4,5-tetrahydrodipicolinate + NADP(+) + H2O = (2S,4S)-4-hydroxy-2,3,4,5-tetrahydrodipicolinate + NADPH + H(+). The protein operates within amino-acid biosynthesis; L-lysine biosynthesis via DAP pathway; (S)-tetrahydrodipicolinate from L-aspartate: step 4/4. Catalyzes the conversion of 4-hydroxy-tetrahydrodipicolinate (HTPA) to tetrahydrodipicolinate. The protein is 4-hydroxy-tetrahydrodipicolinate reductase of Archaeoglobus fulgidus (strain ATCC 49558 / DSM 4304 / JCM 9628 / NBRC 100126 / VC-16).